We begin with the raw amino-acid sequence, 428 residues long: UPF0229 protein YeaH (428 aa).

Over residues 78 to 90 (GNDHFIQNDRIER) the composition is skewed to basic and acidic residues. The tract at residues 78–111 (GNDHFIQNDRIERPQGGGGGGSGSGQGQASQDGE) is disordered. Over residues 92-103 (QGGGGGGSGSGQ) the composition is skewed to gly residues.

It belongs to the UPF0229 family.

The protein is UPF0229 protein YeaH of Salmonella heidelberg (strain SL476).